Reading from the N-terminus, the 187-residue chain is MAADISQWAGPLCLQEVDEPPQHALRVDYAGVTVDELGKVLTPTQVMNRPSSISWDGLDPGKLYTLVLTDPDAPSRKDPKFREWHHFLVVNMKGNDISSGTVLSDYVGSGPPSGTGLHRYVWLVYEQEQPLSCDEPILSNKSGDNRGKFKVETFRKKYNLGAPVAGTCYQAEWDDYVPKLYEQLSGK.

Ala2 carries the post-translational modification N-acetylalanine; in peptide hippocampal cholinergic neurostimulating. Ser6 is subject to Phosphoserine. Position 42 is a phosphothreonine (Thr42). Phosphoserine is present on residues Ser51, Ser52, Ser54, Ser98, and Ser132. Residues 93–134 (KGNDISSGTVLSDYVGSGPPSGTGLHRYVWLVYEQEQPLSCD) form an interaction with RAF1 region.

The protein belongs to the phosphatidylethanolamine-binding protein family. In terms of assembly, has a tendency to form dimers by disulfide cross-linking. Interacts with RAF1 and this interaction is enhanced if RAF1 is phosphorylated on residues 'Ser-338', 'Ser-339', 'Tyr-340' and 'Tyr-341'. Interacts with ALOX15; in response to IL13/interleukin-13, prevents the interaction of PEBP1 with RAF1 to activate the ERK signaling cascade. As to expression, HCNP is expressed in brain. Increased expression in aged senescence-accelerated mice.

The protein resides in the cytoplasm. Functionally, binds ATP, opioids and phosphatidylethanolamine. Has lower affinity for phosphatidylinositol and phosphatidylcholine. Serine protease inhibitor which inhibits thrombin, neuropsin and chymotrypsin but not trypsin, tissue type plasminogen activator and elastase. Inhibits the kinase activity of RAF1 by inhibiting its activation and by dissociating the RAF1/MEK complex and acting as a competitive inhibitor of MEK phosphorylation. Its function is as follows. HCNP may be involved in the function of the presynaptic cholinergic neurons of the central nervous system. HCNP increases the production of choline acetyltransferase but not acetylcholinesterase. Seems to be mediated by a specific receptor. The polypeptide is Phosphatidylethanolamine-binding protein 1 (Pebp1) (Mus musculus (Mouse)).